We begin with the raw amino-acid sequence, 288 residues long: Pyridoxal kinase PdxY (288 aa).

Substrate-binding positions include S12 and T47–Q48. Residues D114, E151, K184, and R211–L214 each bind ATP. D225 lines the substrate pocket.

Belongs to the pyridoxine kinase family. PdxY subfamily. In terms of assembly, homodimer. The cofactor is Mg(2+).

It catalyses the reaction pyridoxal + ATP = pyridoxal 5'-phosphate + ADP + H(+). Its pathway is cofactor metabolism; pyridoxal 5'-phosphate salvage; pyridoxal 5'-phosphate from pyridoxal: step 1/1. Functionally, pyridoxal kinase involved in the salvage pathway of pyridoxal 5'-phosphate (PLP). Catalyzes the phosphorylation of pyridoxal to PLP. This chain is Pyridoxal kinase PdxY, found in Pseudomonas aeruginosa (strain UCBPP-PA14).